Here is a 131-residue protein sequence, read N- to C-terminus: Fumarate reductase subunit C (131 aa).

The next 3 membrane-spanning stretches (helical) occupy residues 30-50 (EGTA…LFAL), 63-83 (FLQN…ALLH), and 109-129 (IIKS…FVAL).

The protein belongs to the FrdC family. In terms of assembly, part of an enzyme complex containing four subunits: a flavoprotein (FrdA), an iron-sulfur protein (FrdB), and two hydrophobic anchor proteins (FrdC and FrdD).

The protein localises to the cell inner membrane. Two distinct, membrane-bound, FAD-containing enzymes are responsible for the catalysis of fumarate and succinate interconversion; fumarate reductase is used in anaerobic growth, and succinate dehydrogenase is used in aerobic growth. Anchors the catalytic components of the fumarate reductase complex to the cell inner membrane, binds quinones. This chain is Fumarate reductase subunit C, found in Shigella boydii serotype 18 (strain CDC 3083-94 / BS512).